The following is a 140-amino-acid chain: MTDLSNLVSQCGVDLYDAEVVNENGRVIYRVYITKNGGVSLEECEAVSKLLSPIYDVMPPVSGEWILEVSSPGLERKLSKIEHFTLSIGEFAKIILNDKTEIKGKIVSVKDDNICINIKNNESIEVKFENIKKAKTYMEW.

Belongs to the RimP family.

It localises to the cytoplasm. Its function is as follows. Required for maturation of 30S ribosomal subunits. The polypeptide is Ribosome maturation factor RimP (Campylobacter fetus subsp. fetus (strain 82-40)).